The chain runs to 278 residues: Hydroxyethylthiazole kinase (278 aa).

Substrate is bound at residue Met-48. ATP-binding residues include Arg-124 and Thr-175. Substrate is bound at residue Gly-202.

It belongs to the Thz kinase family. It depends on Mg(2+) as a cofactor.

The enzyme catalyses 5-(2-hydroxyethyl)-4-methylthiazole + ATP = 4-methyl-5-(2-phosphooxyethyl)-thiazole + ADP + H(+). Its pathway is cofactor biosynthesis; thiamine diphosphate biosynthesis; 4-methyl-5-(2-phosphoethyl)-thiazole from 5-(2-hydroxyethyl)-4-methylthiazole: step 1/1. In terms of biological role, catalyzes the phosphorylation of the hydroxyl group of 4-methyl-5-beta-hydroxyethylthiazole (THZ). This chain is Hydroxyethylthiazole kinase, found in Clostridium botulinum (strain Eklund 17B / Type B).